We begin with the raw amino-acid sequence, 199 residues long: NAD(P)H dehydrogenase (quinone) (199 aa).

The Flavodoxin-like domain occupies 4–190 (VLVLYYSAYG…AGARYQGRVI (187 aa)). FMN contacts are provided by residues 10 to 15 (SAYGHI) and 78 to 80 (TRF). Residue Y12 participates in NAD(+) binding. W98 serves as a coordination point for substrate. Residues 113–119 (STATQHG) and H134 each bind FMN.

It belongs to the WrbA family. It depends on FMN as a cofactor.

The enzyme catalyses a quinone + NADH + H(+) = a quinol + NAD(+). It carries out the reaction a quinone + NADPH + H(+) = a quinol + NADP(+). The chain is NAD(P)H dehydrogenase (quinone) from Bradyrhizobium sp. (strain BTAi1 / ATCC BAA-1182).